Here is a 429-residue protein sequence, read N- to C-terminus: GTPase Obg (429 aa).

The Obg domain maps to 1–158; it reads MLIDKCTLFL…IEAQFELKYI (158 aa). Residues 159-330 form the OBG-type G domain; that stretch reads ADVGLLGLPN…LLKDIFKDYK (172 aa). GTP contacts are provided by residues 165 to 172, 190 to 194, 211 to 214, 281 to 284, and 311 to 313; these read GLPNAGKS, FTTLS, DIPG, NKID, and SGF. Mg(2+) contacts are provided by Ser172 and Thr192. The 79-residue stretch at 351–429 folds into the OCT domain; that stretch reads KVEKEQEDIV…RIQDVMFEIN (79 aa).

Belongs to the TRAFAC class OBG-HflX-like GTPase superfamily. OBG GTPase family. Monomer. It depends on Mg(2+) as a cofactor.

Its subcellular location is the cytoplasm. Functionally, an essential GTPase which binds GTP, GDP and possibly (p)ppGpp with moderate affinity, with high nucleotide exchange rates and a fairly low GTP hydrolysis rate. Plays a role in control of the cell cycle, stress response, ribosome biogenesis and in those bacteria that undergo differentiation, in morphogenesis control. This is GTPase Obg from Malacoplasma penetrans (strain HF-2) (Mycoplasma penetrans).